Consider the following 176-residue polypeptide: Nicotinamide-nucleotide adenylyltransferase (176 aa).

The protein belongs to the archaeal NMN adenylyltransferase family.

It localises to the cytoplasm. It carries out the reaction beta-nicotinamide D-ribonucleotide + ATP + H(+) = diphosphate + NAD(+). Its pathway is cofactor biosynthesis; NAD(+) biosynthesis; NAD(+) from nicotinamide D-ribonucleotide: step 1/1. This Halorubrum lacusprofundi (strain ATCC 49239 / DSM 5036 / JCM 8891 / ACAM 34) protein is Nicotinamide-nucleotide adenylyltransferase.